The following is a 208-amino-acid chain: Small ribosomal subunit protein uS4 (208 aa).

Residues 97–160 enclose the S4 RNA-binding domain; it reads TRLDNVCYRM…QKQLRVQEAL (64 aa).

Belongs to the universal ribosomal protein uS4 family. In terms of assembly, part of the 30S ribosomal subunit. Contacts protein S5. The interaction surface between S4 and S5 is involved in control of translational fidelity.

Functionally, one of the primary rRNA binding proteins, it binds directly to 16S rRNA where it nucleates assembly of the body of the 30S subunit. In terms of biological role, with S5 and S12 plays an important role in translational accuracy. In Xanthomonas axonopodis pv. citri (strain 306), this protein is Small ribosomal subunit protein uS4.